Reading from the N-terminus, the 306-residue chain is Tryptophan 2,3-dioxygenase (306 aa).

Positions 1–29 are disordered; sequence MQPPGDDAAPRCPFAGAHAPDAPHVPEAA. Residues 75 to 79, Tyr137, and Arg141 each bind substrate; that span reads FIIQH. His264 provides a ligand contact to heme. Thr278 serves as a coordination point for substrate.

The protein belongs to the tryptophan 2,3-dioxygenase family. In terms of assembly, homotetramer. Heme is required as a cofactor.

The catalysed reaction is L-tryptophan + O2 = N-formyl-L-kynurenine. It functions in the pathway amino-acid degradation; L-tryptophan degradation via kynurenine pathway; L-kynurenine from L-tryptophan: step 1/2. Its function is as follows. Heme-dependent dioxygenase that catalyzes the oxidative cleavage of the L-tryptophan (L-Trp) pyrrole ring and converts L-tryptophan to N-formyl-L-kynurenine. Catalyzes the oxidative cleavage of the indole moiety. The polypeptide is Tryptophan 2,3-dioxygenase (Burkholderia mallei (strain NCTC 10247)).